The primary structure comprises 347 residues: Protein RecA (347 aa).

68-75 contacts ATP; it reads GPESSGKT.

Belongs to the RecA family.

The protein localises to the cytoplasm. Its function is as follows. Can catalyze the hydrolysis of ATP in the presence of single-stranded DNA, the ATP-dependent uptake of single-stranded DNA by duplex DNA, and the ATP-dependent hybridization of homologous single-stranded DNAs. It interacts with LexA causing its activation and leading to its autocatalytic cleavage. In Rhodococcus jostii (strain RHA1), this protein is Protein RecA.